A 458-amino-acid chain; its full sequence is Phosphoglucosamine mutase (458 aa).

The active-site Phosphoserine intermediate is the S108. Mg(2+) is bound by residues S108, D247, D249, and D251. Residue S108 is modified to Phosphoserine.

It belongs to the phosphohexose mutase family. It depends on Mg(2+) as a cofactor. In terms of processing, activated by phosphorylation.

It carries out the reaction alpha-D-glucosamine 1-phosphate = D-glucosamine 6-phosphate. In terms of biological role, catalyzes the conversion of glucosamine-6-phosphate to glucosamine-1-phosphate. This is Phosphoglucosamine mutase from Thiobacillus denitrificans (strain ATCC 25259 / T1).